We begin with the raw amino-acid sequence, 307 residues long: Nicotinamide/nicotinic acid mononucleotide adenylyltransferase 2 (307 aa).

NAD(+) is bound by residues Ser-16 and Phe-17. His-24 contributes to the ATP binding site. Residues Trp-92 and Thr-95 each coordinate NAD(+). Residues Cys-164 and Cys-165 are each lipidated (S-palmitoyl cysteine). Gly-200, Asp-202, Leu-212, Trp-213, and Arg-232 together coordinate NAD(+). Position 271–274 (271–274 (TKSR)) interacts with ATP.

The protein belongs to the eukaryotic NMN adenylyltransferase family. In terms of assembly, monomer. The cofactor is Mg(2+). Post-translationally, degraded in response to injured neurite. Degradation is caused by polyubiquitination by MYCBP2 after recognition by FBXO45. Palmitoylated; palmitoylation is required for membrane association.

It is found in the golgi apparatus membrane. Its subcellular location is the cytoplasmic vesicle membrane. It localises to the cytoplasm. The protein resides in the cell projection. The protein localises to the axon. The catalysed reaction is beta-nicotinamide D-ribonucleotide + ATP + H(+) = diphosphate + NAD(+). It catalyses the reaction nicotinate beta-D-ribonucleotide + ATP + H(+) = deamido-NAD(+) + diphosphate. The protein operates within cofactor biosynthesis; NAD(+) biosynthesis; NAD(+) from nicotinamide D-ribonucleotide: step 1/1. It functions in the pathway cofactor biosynthesis; NAD(+) biosynthesis; deamido-NAD(+) from nicotinate D-ribonucleotide: step 1/1. Its activity is regulated as follows. Inhibited by P1-(adenosine-5')-P3-(nicotinamide-riboside-5')-triphosphate (Np3AD) and P1-(adenosine-5')-P4-(nicotinamide-riboside-5')-tetraphosphate (Np4AD). Its function is as follows. Nicotinamide/nicotinate-nucleotide adenylyltransferase that acts as an axon maintenance factor. Axon survival factor required for the maintenance of healthy axons: acts by delaying Wallerian axon degeneration, an evolutionarily conserved process that drives the loss of damaged axons. Catalyzes the formation of NAD(+) from nicotinamide mononucleotide (NMN) and ATP. Can also use the deamidated form; nicotinic acid mononucleotide (NaMN) as substrate but with a lower efficiency. Cannot use triazofurin monophosphate (TrMP) as substrate. Also catalyzes the reverse reaction, i.e. the pyrophosphorolytic cleavage of NAD(+). For the pyrophosphorolytic activity prefers NAD(+), NADH and NaAD as substrates and degrades nicotinic acid adenine dinucleotide phosphate (NHD) less effectively. Fails to cleave phosphorylated dinucleotides NADP(+), NADPH and NaADP(+). Also acts as an activator of ADP-ribosylation by supporting the catalytic activity of PARP16 and promoting mono-ADP-ribosylation of ribosomes by PARP16. May be involved in the maintenance of axonal integrity. In Rattus norvegicus (Rat), this protein is Nicotinamide/nicotinic acid mononucleotide adenylyltransferase 2 (Nmnat2).